Reading from the N-terminus, the 498-residue chain is ATP synthase subunit beta, chloroplastic (498 aa).

172–179 (GGAGVGKT) serves as a coordination point for ATP.

The protein belongs to the ATPase alpha/beta chains family. F-type ATPases have 2 components, CF(1) - the catalytic core - and CF(0) - the membrane proton channel. CF(1) has five subunits: alpha(3), beta(3), gamma(1), delta(1), epsilon(1). CF(0) has four main subunits: a(1), b(1), b'(1) and c(9-12).

It localises to the plastid. The protein localises to the chloroplast thylakoid membrane. It catalyses the reaction ATP + H2O + 4 H(+)(in) = ADP + phosphate + 5 H(+)(out). Produces ATP from ADP in the presence of a proton gradient across the membrane. The catalytic sites are hosted primarily by the beta subunits. The polypeptide is ATP synthase subunit beta, chloroplastic (Idiospermum australiense (Ribbonwood tree)).